Reading from the N-terminus, the 626-residue chain is ATP-dependent zinc metalloprotease FtsH 3 (626 aa).

The Cytoplasmic portion of the chain corresponds to 1 to 7 (MNKLFRS). Residues 8-28 (LAFYMLILVISVAIAVQLGGT) traverse the membrane as a helical segment. Residues 29–103 (SQQTTQLVYS…LDFRQDNTSG (75 aa)) are Extracellular-facing. A helical transmembrane segment spans residues 104–124 (IWAMLLQTLVPVVLVLLAFFF). The Cytoplasmic portion of the chain corresponds to 125–626 (IMQQTQGSGN…GGTSQVAPAF (502 aa)). Position 197–204 (197–204 (GPPGTGKT)) interacts with ATP. H420 is a binding site for Zn(2+). Residue E421 is part of the active site. Zn(2+) contacts are provided by H424 and D496. The interval 602-626 (PPRPKPEPLKPRMVGGGTSQVAPAF) is disordered.

It in the central section; belongs to the AAA ATPase family. This sequence in the C-terminal section; belongs to the peptidase M41 family. In terms of assembly, homohexamer. It depends on Zn(2+) as a cofactor.

It localises to the cell membrane. Its function is as follows. Acts as a processive, ATP-dependent zinc metallopeptidase for both cytoplasmic and membrane proteins. Plays a role in the quality control of integral membrane proteins. This Symbiobacterium thermophilum (strain DSM 24528 / JCM 14929 / IAM 14863 / T) protein is ATP-dependent zinc metalloprotease FtsH 3.